We begin with the raw amino-acid sequence, 445 residues long: Probable histidine--tRNA ligase, cytoplasmic (445 aa).

Belongs to the class-II aminoacyl-tRNA synthetase family.

The protein resides in the cytoplasm. It catalyses the reaction tRNA(His) + L-histidine + ATP = L-histidyl-tRNA(His) + AMP + diphosphate + H(+). The protein is Probable histidine--tRNA ligase, cytoplasmic of Antonospora locustae (Microsporidian parasite).